We begin with the raw amino-acid sequence, 76 residues long: Exodeoxyribonuclease 7 small subunit (76 aa).

It belongs to the XseB family. Heterooligomer composed of large and small subunits.

The protein resides in the cytoplasm. The enzyme catalyses Exonucleolytic cleavage in either 5'- to 3'- or 3'- to 5'-direction to yield nucleoside 5'-phosphates.. Its function is as follows. Bidirectionally degrades single-stranded DNA into large acid-insoluble oligonucleotides, which are then degraded further into small acid-soluble oligonucleotides. This is Exodeoxyribonuclease 7 small subunit from Staphylococcus aureus (strain Mu3 / ATCC 700698).